The chain runs to 1375 residues: DNA-directed RNA polymerase subunit beta (1375 aa).

The protein belongs to the RNA polymerase beta chain family. In terms of assembly, the RNAP catalytic core consists of 2 alpha, 1 beta, 1 beta' and 1 omega subunit. When a sigma factor is associated with the core the holoenzyme is formed, which can initiate transcription.

It carries out the reaction RNA(n) + a ribonucleoside 5'-triphosphate = RNA(n+1) + diphosphate. In terms of biological role, DNA-dependent RNA polymerase catalyzes the transcription of DNA into RNA using the four ribonucleoside triphosphates as substrates. The polypeptide is DNA-directed RNA polymerase subunit beta (Methylorubrum populi (strain ATCC BAA-705 / NCIMB 13946 / BJ001) (Methylobacterium populi)).